The following is a 431-amino-acid chain: Glucose-1-phosphate adenylyltransferase (431 aa).

Lys-39 is a binding site for beta-D-fructose 1,6-bisphosphate. Arg-40, His-46, and Arg-52 together coordinate AMP. Tyr-114 is an alpha-D-glucose 1-phosphate binding site. Arg-130 serves as a coordination point for AMP. Residues Gly-179, 194–195 (EK), and Ser-212 contribute to the alpha-D-glucose 1-phosphate site. Positions 370 and 386 each coordinate AMP. Residues 419-423 (REMLR) and 429-431 (QER) contribute to the beta-D-fructose 1,6-bisphosphate site.

This sequence belongs to the bacterial/plant glucose-1-phosphate adenylyltransferase family. As to quaternary structure, homotetramer.

The catalysed reaction is alpha-D-glucose 1-phosphate + ATP + H(+) = ADP-alpha-D-glucose + diphosphate. It functions in the pathway glycan biosynthesis; glycogen biosynthesis. With respect to regulation, allosterically activated by fructose-1,6-bisphosphate (F16BP) and inhibited by AMP. Involved in the biosynthesis of ADP-glucose, a building block required for the elongation reactions to produce glycogen. Catalyzes the reaction between ATP and alpha-D-glucose 1-phosphate (G1P) to produce pyrophosphate and ADP-Glc. The chain is Glucose-1-phosphate adenylyltransferase from Salmonella arizonae (strain ATCC BAA-731 / CDC346-86 / RSK2980).